The primary structure comprises 337 residues: Glycerol-3-phosphate dehydrogenase [NAD(P)+] (337 aa).

W11, R30, and K102 together coordinate NADPH. The sn-glycerol 3-phosphate site is built by K102, G138, and S140. NADPH is bound at residue A142. Residues K193, D246, S256, R257, and N258 each contribute to the sn-glycerol 3-phosphate site. K193 acts as the Proton acceptor in catalysis. R257 provides a ligand contact to NADPH. NADPH contacts are provided by V281 and E283.

Belongs to the NAD-dependent glycerol-3-phosphate dehydrogenase family.

The protein resides in the cytoplasm. The enzyme catalyses sn-glycerol 3-phosphate + NAD(+) = dihydroxyacetone phosphate + NADH + H(+). The catalysed reaction is sn-glycerol 3-phosphate + NADP(+) = dihydroxyacetone phosphate + NADPH + H(+). Its pathway is membrane lipid metabolism; glycerophospholipid metabolism. In terms of biological role, catalyzes the reduction of the glycolytic intermediate dihydroxyacetone phosphate (DHAP) to sn-glycerol 3-phosphate (G3P), the key precursor for phospholipid synthesis. The protein is Glycerol-3-phosphate dehydrogenase [NAD(P)+] of Variovorax paradoxus (strain S110).